A 260-amino-acid chain; its full sequence is Ribonuclease HII (260 aa).

Residues 73-260 (LHIAGIDEAG…APVQQQLDIV (188 aa)) enclose the RNase H type-2 domain. A divalent metal cation is bound by residues Asp-79, Glu-80, and Asp-171.

Belongs to the RNase HII family. The cofactor is Mn(2+). Mg(2+) is required as a cofactor.

Its subcellular location is the cytoplasm. The enzyme catalyses Endonucleolytic cleavage to 5'-phosphomonoester.. Endonuclease that specifically degrades the RNA of RNA-DNA hybrids. This chain is Ribonuclease HII, found in Desulfitobacterium hafniense (strain Y51).